We begin with the raw amino-acid sequence, 328 residues long: D-cysteine desulfhydrase (328 aa).

At K51 the chain carries N6-(pyridoxal phosphate)lysine.

This sequence belongs to the ACC deaminase/D-cysteine desulfhydrase family. In terms of assembly, homodimer. Requires pyridoxal 5'-phosphate as cofactor.

The enzyme catalyses D-cysteine + H2O = hydrogen sulfide + pyruvate + NH4(+) + H(+). Its function is as follows. Catalyzes the alpha,beta-elimination reaction of D-cysteine and of several D-cysteine derivatives. It could be a defense mechanism against D-cysteine. The protein is D-cysteine desulfhydrase of Escherichia coli (strain UTI89 / UPEC).